Here is a 309-residue protein sequence, read N- to C-terminus: Mycothiol acetyltransferase (309 aa).

2 N-acetyltransferase domains span residues 16-158 (ETLA…LDLP) and 166-309 (VSVR…RTET). Glu47 contributes to the 1D-myo-inositol 2-(L-cysteinylamino)-2-deoxy-alpha-D-glucopyranoside binding site. Residue 92 to 94 (LVV) participates in acetyl-CoA binding. The 1D-myo-inositol 2-(L-cysteinylamino)-2-deoxy-alpha-D-glucopyranoside site is built by Glu193, Lys232, and Glu241. Residues 245–247 (LGI) and 252–258 (QGGGLGK) each bind acetyl-CoA. Position 279 (Tyr279) interacts with 1D-myo-inositol 2-(L-cysteinylamino)-2-deoxy-alpha-D-glucopyranoside.

It belongs to the acetyltransferase family. MshD subfamily. In terms of assembly, monomer.

It catalyses the reaction 1D-myo-inositol 2-(L-cysteinylamino)-2-deoxy-alpha-D-glucopyranoside + acetyl-CoA = mycothiol + CoA + H(+). Functionally, catalyzes the transfer of acetyl from acetyl-CoA to desacetylmycothiol (Cys-GlcN-Ins) to form mycothiol. The polypeptide is Mycothiol acetyltransferase (Streptomyces coelicolor (strain ATCC BAA-471 / A3(2) / M145)).